Reading from the N-terminus, the 337-residue chain is MLTLPFDESVVMPESQMCRKFSRECEDQKQIKKPESFSKQIVLRGKSIKRAPGEETEKEEEEEDREEEDENGLPRRRGLRKKKTTKLRLERVKFRRQEANARERNRMHGLNDALDNLRKVVPCYSKTQKLSKIETLRLAKNYIWALSEILRIGKRPDLLTFVQNLCKGLSQPTTNLVAGCLQLNARSFLVGQGGEAAHHTRSPYSTFYPPYHSPELTTPPGHGTLDNSKSMKPYNYCSAYESFYESTSPECASPQFEGPLSPPPINYNGIFSLKQEETLDYGKNYNYGMHYCAVPPRGPLGQGAMFRLPTDSHFPYDLHLRSQSLTMQDELNAVFHN.

The segment at 43-82 (LRGKSIKRAPGEETEKEEEEEDREEEDENGLPRRRGLRKK) is disordered. Residues 54-71 (EETEKEEEEEDREEEDEN) are compositionally biased toward acidic residues. Residues 80–86 (RKKKTTK) carry the Nuclear localization signal motif. The region spanning 94–146 (FRRQEANARERNRMHGLNDALDNLRKVVPCYSKTQKLSKIETLRLAKNYIWAL) is the bHLH domain.

Efficient DNA binding requires dimerization with another bHLH protein.

The protein localises to the nucleus. Its function is as follows. Activates E box-dependent transcription in collaboration with TCF3/E47. May be a trans-acting factor involved in the development and maintenance of the mammalian nervous system. Transactivates the promoter of its own gene. The sequence is that of Neurogenic differentiation factor 6 (NEUROD6) from Bos taurus (Bovine).